Reading from the N-terminus, the 509-residue chain is ATP synthase subunit alpha (509 aa).

Residue G169–T176 coordinates ATP.

The protein belongs to the ATPase alpha/beta chains family. In terms of assembly, F-type ATPases have 2 components, CF(1) - the catalytic core - and CF(0) - the membrane proton channel. CF(1) has five subunits: alpha(3), beta(3), gamma(1), delta(1), epsilon(1). CF(0) has three main subunits: a(1), b(2) and c(9-12). The alpha and beta chains form an alternating ring which encloses part of the gamma chain. CF(1) is attached to CF(0) by a central stalk formed by the gamma and epsilon chains, while a peripheral stalk is formed by the delta and b chains.

Its subcellular location is the cell membrane. The enzyme catalyses ATP + H2O + 4 H(+)(in) = ADP + phosphate + 5 H(+)(out). Its function is as follows. Produces ATP from ADP in the presence of a proton gradient across the membrane. The alpha chain is a regulatory subunit. The polypeptide is ATP synthase subunit alpha (Lacticaseibacillus casei (strain BL23) (Lactobacillus casei)).